The following is a 297-amino-acid chain: 4,5-DOPA dioxygenase extradiol-like protein (297 aa).

His30, His82, His205, and His263 together coordinate Zn(2+).

The protein belongs to the DODA-type extradiol aromatic ring-opening dioxygenase family. Zn(2+) serves as cofactor.

It is found in the cytoplasm. It localises to the nucleus. May be involved in the metabolism of aromatic compounds. The sequence is that of 4,5-DOPA dioxygenase extradiol-like protein from Schizosaccharomyces pombe (strain 972 / ATCC 24843) (Fission yeast).